The primary structure comprises 406 residues: Arginine deiminase (406 aa).

Cys-396 (amidino-cysteine intermediate) is an active-site residue.

Belongs to the arginine deiminase family.

The protein resides in the cytoplasm. It catalyses the reaction L-arginine + H2O = L-citrulline + NH4(+). It participates in amino-acid degradation; L-arginine degradation via ADI pathway; carbamoyl phosphate from L-arginine: step 1/2. This is Arginine deiminase from Salmonella typhimurium (strain LT2 / SGSC1412 / ATCC 700720).